Reading from the N-terminus, the 299-residue chain is MTQPEPLVITLLGPTASGKTALSLEIAERLNLPVINVDSRQLYREMTVGTAKPTAEQRARVPHHLLDLRNPDQPITLQEFQAEAEPCIQRELQSRGMALLVGGSGLYLKALTSGLKPPAVPPQAQLREQLSQLGQAICHPLLQQADPTAGAKIAPADAVRTQRALEVLYATGRPMSSQATATPPPWRVLELGLDPANLRQRIQQRTDQLYSDGLVEETRQLSERYGADLPLLQTIGYGEALQLLEGTMNQAKANRITTQRTRQFAKRQRTWFRRQHQPHWLAPATELDQAMTLIEQHLR.

13 to 20 (GPTASGKT) serves as a coordination point for ATP. 15 to 20 (TASGKT) is a binding site for substrate. The interaction with substrate tRNA stretch occupies residues 38-41 (DSRQ).

This sequence belongs to the IPP transferase family. Monomer. Mg(2+) serves as cofactor.

The enzyme catalyses adenosine(37) in tRNA + dimethylallyl diphosphate = N(6)-dimethylallyladenosine(37) in tRNA + diphosphate. Functionally, catalyzes the transfer of a dimethylallyl group onto the adenine at position 37 in tRNAs that read codons beginning with uridine, leading to the formation of N6-(dimethylallyl)adenosine (i(6)A). The chain is tRNA dimethylallyltransferase from Parasynechococcus marenigrum (strain WH8102).